Here is an 82-residue protein sequence, read N- to C-terminus: uncharacterized protein (82 aa).

The next 3 membrane-spanning stretches (helical) occupy residues 1–21 (MSAS…SVST), 22–42 (VLLG…LAAF), and 62–82 (WRLL…LTLL).

Its subcellular location is the cell membrane. This is an uncharacterized protein from Stutzerimonas stutzeri (Pseudomonas stutzeri).